Consider the following 245-residue polypeptide: Carbohydrate deacetylase 1 (245 aa).

Mg(2+) is bound by residues histidine 59 and histidine 125.

Belongs to the YdjC deacetylase family. Homodimer. It depends on Mg(2+) as a cofactor.

Functionally, probably catalyzes the deacetylation of acetylated carbohydrates an important step in the degradation of oligosaccharides. In Listeria innocua serovar 6a (strain ATCC BAA-680 / CLIP 11262), this protein is Carbohydrate deacetylase 1.